A 292-amino-acid polypeptide reads, in one-letter code: Elongation factor Ts (292 aa).

The interval 80–83 (TDFV) is involved in Mg(2+) ion dislocation from EF-Tu.

It belongs to the EF-Ts family.

It localises to the cytoplasm. In terms of biological role, associates with the EF-Tu.GDP complex and induces the exchange of GDP to GTP. It remains bound to the aminoacyl-tRNA.EF-Tu.GTP complex up to the GTP hydrolysis stage on the ribosome. The protein is Elongation factor Ts of Oenococcus oeni (strain ATCC BAA-331 / PSU-1).